A 513-amino-acid polypeptide reads, in one-letter code: MGIQAAEISAILKDQIKNFGQEAEVAEIGRVLSVGDGIARVYGLDNVQAGEMVEFPGGIMGMALNLESDNVGVVIFGSDRDIKEGDTVKRTNSIVDVPAGPELLGRVVDGLGNPLDGKGPIEAKERKVADVKAPGIIPRKSVHEPMATGLKSVDAMIPVGRGQRELIIGDRQTGKTAIALDTILNQKSYNDAAGDDDSKKLYCVYVAVGQKRSTVAQLVKKLEESGAMEYSIVVAATASDPAPMQFLAPYAATAMAEYFRDSGKHALIIYDDLSKQAVAYRQMSLLLRRPPGREAYPGDVFYLHSRLLERSAKLNEDFGAGSLTALPIIETQGGDVSAFIPTNVISITDGQIFLETELFYQGIRPAVNTGLSVSRVGSSAQTDAMSSVAGPVKLSLAQYREMAAFAQFGSDLDAATQQLLARGARLTELMKQPQYSPLTNSEIVCIIFAGTNGYLDKVDVKEVGRYEAELLTFLRSKKADFLQWITDEDPKFKKGEPVEKMKAVLDEFAADFA.

Residue 169–176 coordinates ATP; that stretch reads GDRQTGKT.

This sequence belongs to the ATPase alpha/beta chains family. As to quaternary structure, F-type ATPases have 2 components, CF(1) - the catalytic core - and CF(0) - the membrane proton channel. CF(1) has five subunits: alpha(3), beta(3), gamma(1), delta(1), epsilon(1). CF(0) has three main subunits: a(1), b(2) and c(9-12). The alpha and beta chains form an alternating ring which encloses part of the gamma chain. CF(1) is attached to CF(0) by a central stalk formed by the gamma and epsilon chains, while a peripheral stalk is formed by the delta and b chains.

It localises to the cell inner membrane. It catalyses the reaction ATP + H2O + 4 H(+)(in) = ADP + phosphate + 5 H(+)(out). Produces ATP from ADP in the presence of a proton gradient across the membrane. The alpha chain is a regulatory subunit. The sequence is that of ATP synthase subunit alpha from Ruegeria sp. (strain TM1040) (Silicibacter sp.).